Here is a 210-residue protein sequence, read N- to C-terminus: Putative protein-lysine deacylase ABHD14B (210 aa).

A Phosphoserine modification is found at Ser91. Catalysis depends on charge relay system residues Ser111, Asp162, and His188.

The protein belongs to the AB hydrolase superfamily. ABHD14 family. May interact with TAF1.

It is found in the cytoplasm. Its subcellular location is the nucleus. It catalyses the reaction L-lysyl-[protein] + acetyl-CoA = N(6)-acetyl-L-lysyl-[protein] + CoA + H(+). Functionally, acts as an atypical protein-lysine deacetylase in vitro. Catalyzes the deacetylation of lysine residues using CoA as substrate, generating acetyl-CoA and the free amine of protein-lysine residues. Additional experiments are however required to confirm the protein-lysine deacetylase activity in vivo. Has hydrolase activity towards various surrogate p-nitrophenyl (pNp) substrates, such as pNp-butyrate, pNp-acetate and pNp-octanoate in vitro, with a strong preference for pNp-acetate. May activate transcription. This is Putative protein-lysine deacylase ABHD14B from Rattus norvegicus (Rat).